Here is a 513-residue protein sequence, read N- to C-terminus: Maturase K (513 aa).

Belongs to the intron maturase 2 family. MatK subfamily.

It is found in the plastid. The protein resides in the chloroplast. Usually encoded in the trnK tRNA gene intron. Probably assists in splicing its own and other chloroplast group II introns. This is Maturase K from Astrebla lappacea (Curly Mitchell grass).